Here is a 460-residue protein sequence, read N- to C-terminus: Cysteine--tRNA ligase (460 aa).

A Zn(2+)-binding site is contributed by cysteine 28. A 'HIGH' region motif is present at residues 30–40 (NTVYDFCHIGH). Zn(2+) contacts are provided by cysteine 209, histidine 234, and glutamate 238. Positions 266-270 (KMSKS) match the 'KMSKS' region motif. Lysine 269 lines the ATP pocket.

This sequence belongs to the class-I aminoacyl-tRNA synthetase family. As to quaternary structure, monomer. Requires Zn(2+) as cofactor.

Its subcellular location is the cytoplasm. It carries out the reaction tRNA(Cys) + L-cysteine + ATP = L-cysteinyl-tRNA(Cys) + AMP + diphosphate. The polypeptide is Cysteine--tRNA ligase (Marinomonas sp. (strain MWYL1)).